Reading from the N-terminus, the 370-residue chain is UDP-N-acetylglucosamine--N-acetylmuramyl-(pentapeptide) pyrophosphoryl-undecaprenol N-acetylglucosamine transferase (370 aa).

Residues 10-12 (TGG), Asn126, Ser200, Ile255, and Gln300 each bind UDP-N-acetyl-alpha-D-glucosamine.

The protein belongs to the glycosyltransferase 28 family. MurG subfamily.

Its subcellular location is the cell membrane. It catalyses the reaction Mur2Ac(oyl-L-Ala-gamma-D-Glu-L-Lys-D-Ala-D-Ala)-di-trans,octa-cis-undecaprenyl diphosphate + UDP-N-acetyl-alpha-D-glucosamine = beta-D-GlcNAc-(1-&gt;4)-Mur2Ac(oyl-L-Ala-gamma-D-Glu-L-Lys-D-Ala-D-Ala)-di-trans,octa-cis-undecaprenyl diphosphate + UDP + H(+). It participates in cell wall biogenesis; peptidoglycan biosynthesis. Functionally, cell wall formation. Catalyzes the transfer of a GlcNAc subunit on undecaprenyl-pyrophosphoryl-MurNAc-pentapeptide (lipid intermediate I) to form undecaprenyl-pyrophosphoryl-MurNAc-(pentapeptide)GlcNAc (lipid intermediate II). This Lactobacillus gasseri (strain ATCC 33323 / DSM 20243 / BCRC 14619 / CIP 102991 / JCM 1131 / KCTC 3163 / NCIMB 11718 / NCTC 13722 / AM63) protein is UDP-N-acetylglucosamine--N-acetylmuramyl-(pentapeptide) pyrophosphoryl-undecaprenol N-acetylglucosamine transferase.